The sequence spans 509 residues: Transcription factor SOX-9 (509 aa).

Disordered stretches follow at residues 1-67 (MNLL…SEED) and 160-273 (RLRV…FRDV). Low complexity predominate over residues 30–41 (SAGSPCPSGSGS). Polar residues predominate over residues 42–52 (DTENTRPQENT). Basic and acidic residues-rich tracts occupy residues 56 to 67 (GEPDLKKESEED) and 160 to 174 (RLRV…DYKY). Residues 63-103 (ESEEDKFPVCIREAVSQVLKGYDWTLVPMPVRVNGSSKNKP) are dimerization (DIM). The tract at residues 63 to 103 (ESEEDKFPVCIREAVSQVLKGYDWTLVPMPVRVNGSSKNKP) is PQA. The residue at position 64 (S64) is a Phosphoserine. Residues 105–173 (VKRPMNAFMV…QHKKDHPDYK (69 aa)) constitute a DNA-binding region (HMG box). S211 is subject to Phosphoserine. The tract at residues 224 to 307 (PGEHSGQSQG…LPPNGHPGVP (84 aa)) is transactivation domain (TAM). 2 short sequence motifs (9aaTAD) span residues 275 to 284 (IGELSSDVIS) and 290 to 298 (DVNEFDQYL). The segment at 334-415 (VWMSKQQAPP…HYSEQQQHSP (82 aa)) is disordered. Residues 341 to 376 (APPPPPQQPPQAPPAPQAPPQPQAAPPQQPAAPPQQ) show a composition bias toward pro residues. Over residues 380–415 (HTLTTLSSEPGQSQRTHIKTEQLSPSHYSEQQQHSP) the composition is skewed to polar residues. The interval 394–509 (RTHIKTEQLS…QPVYTQLTRP (116 aa)) is transactivation domain (TAC). A Glycyl lysine isopeptide (Lys-Gly) (interchain with G-Cter in ubiquitin) cross-link involves residue K398. A 9aaTAD 3 motif is present at residues 460–468 (TGLYSTFTY). Residues 479-509 (PIADTSGVPSIPQTHSPQHWEQPVYTQLTRP) form a disordered region. Positions 485–509 (GVPSIPQTHSPQHWEQPVYTQLTRP) are enriched in polar residues.

As to quaternary structure, homodimer; homodimerization is required for activity. Interacts (via C-terminus) with ZNF219; forming a complex that binds to the COL2A1 promoter and activates COL2A1 expression. Interacts with DDRGK1. Interacts with EP300/p300. Interacts with beta-catenin (CTNNB1); inhibiting CTNNB1 activity by competing with the binding sites of TCF/LEF within CTNNB1. Acetylated; acetylation impairs nuclear localization and ability to transactivate expression of target genes. Deacetylated by SIRT1. Post-translationally, phosphorylation at Ser-64 and Ser-211 by PKA increases transcriptional activity and may help delay chondrocyte maturation downstream of PTHLH/PTHrP signaling. Phosphorylation at either Ser-64 or Ser-211 is required for sumoylation, but phosphorylation is not dependent on sumoylation. Phosphorylated on tyrosine residues; tyrosine dephosphorylation by PTPN11/SHP2 blocks SOX9 phosphorylation by PKA and subsequent SUMOylation. In terms of processing, sumoylated; phosphorylation at either Ser-64 or Ser-211 is required for sumoylation. Sumoylation is induced by BMP signaling pathway. Ubiquitinated; ubiquitination leads to proteasomal degradation and is negatively regulated by DDRGK1.

The protein resides in the nucleus. Functionally, transcription factor that plays a key role in chondrocytes differentiation and skeletal development. Specifically binds the 5'-ACAAAG-3' DNA motif present in enhancers and super-enhancers and promotes expression of genes important for chondrogenesis, including cartilage matrix protein-coding genes COL2A1, COL4A2, COL9A1, COL11A2 and ACAN, SOX5 and SOX6. Also binds to some promoter regions. Plays a central role in successive steps of chondrocyte differentiation. Absolutely required for precartilaginous condensation, the first step in chondrogenesis during which skeletal progenitors differentiate into prechondrocytes. Together with SOX5 and SOX6, required for overt chondrogenesis when condensed prechondrocytes differentiate into early stage chondrocytes, the second step in chondrogenesis. Later, required to direct hypertrophic maturation and block osteoblast differentiation of growth plate chondrocytes: maintains chondrocyte columnar proliferation, delays prehypertrophy and then prevents osteoblastic differentiation of chondrocytes by lowering beta-catenin (CTNNB1) signaling and RUNX2 expression. Also required for chondrocyte hypertrophy, both indirectly, by keeping the lineage fate of chondrocytes, and directly, by remaining present in upper hypertrophic cells and transactivating COL10A1 along with MEF2C. Low lipid levels are the main nutritional determinant for chondrogenic commitment of skeletal progenitor cells: when lipids levels are low, FOXO (FOXO1 and FOXO3) transcription factors promote expression of SOX9, which induces chondrogenic commitment and suppresses fatty acid oxidation. Mechanistically, helps, but is not required, to remove epigenetic signatures of transcriptional repression and deposit active promoter and enhancer marks at chondrocyte-specific genes. Acts in cooperation with the Hedgehog pathway-dependent GLI (GLI1 and GLI3) transcription factors. In addition to cartilage development, also acts as a regulator of proliferation and differentiation in epithelial stem/progenitor cells: involved in the lung epithelium during branching morphogenesis, by balancing proliferation and differentiation and regulating the extracellular matrix. Controls epithelial branching during kidney development. The polypeptide is Transcription factor SOX-9 (SOX9) (Callithrix jacchus (White-tufted-ear marmoset)).